The sequence spans 288 residues: Nucleotide-binding protein Mlg_2233 (288 aa).

11 to 18 serves as a coordination point for ATP; the sequence is GLSGSGKS. Position 63-66 (63-66) interacts with GTP; sequence DARN.

The protein belongs to the RapZ-like family.

Displays ATPase and GTPase activities. In Alkalilimnicola ehrlichii (strain ATCC BAA-1101 / DSM 17681 / MLHE-1), this protein is Nucleotide-binding protein Mlg_2233.